Reading from the N-terminus, the 72-residue chain is N-alpha-acetyltransferase 38, NatC auxiliary subunit (72 aa).

The Sm domain maps to 3 to 72; that stretch reads NGEILLTSWL…KHIKSFSVRA (70 aa).

In terms of assembly, component of the N-terminal acetyltransferase C (NatC) complex, composed of the catalytic subunit Naa30, a large auxiliary subunit Naa35 and a small auxiliary subunit Naa38.

The protein localises to the endoplasmic reticulum. Its function is as follows. Component of the NatC N-terminal acetyltransferase, which associates with the ribosome to acetylate nascent protein chains in a cotranslational manner. NatC acetylates protein N-termini starting with methionine, followed by a hydrophobic or amphipathic amino acid, with amino acids at positions 3 and 4 also contributing to NatC recognition. The first 4 amino acids of cognate substrates are recognized at the Naa30-Naa35 interface. NatC-dependent acetylation targets various substrate proteins to specific subcellular sites. The protein is N-alpha-acetyltransferase 38, NatC auxiliary subunit (naa38) of Schizosaccharomyces pombe (strain 972 / ATCC 24843) (Fission yeast).